The chain runs to 85 residues: Small ribosomal subunit protein bS16 (85 aa).

Belongs to the bacterial ribosomal protein bS16 family.

The chain is Small ribosomal subunit protein bS16 from Nitrosomonas eutropha (strain DSM 101675 / C91 / Nm57).